A 164-amino-acid chain; its full sequence is Lipoprotein signal peptidase (164 aa).

Transmembrane regions (helical) follow at residues 6–26, 39–59, 65–85, and 88–108; these read LGVL…LWLL, VLPF…GWFS, GQIL…IWMA, and TTKL…GNAI. Active-site residues include aspartate 118 and aspartate 140. Residues 141 to 161 form a helical membrane-spanning segment; it reads VAIVVGVAALLYDSLIGLPAA.

This sequence belongs to the peptidase A8 family.

The protein resides in the cell inner membrane. It catalyses the reaction Release of signal peptides from bacterial membrane prolipoproteins. Hydrolyzes -Xaa-Yaa-Zaa-|-(S,diacylglyceryl)Cys-, in which Xaa is hydrophobic (preferably Leu), and Yaa (Ala or Ser) and Zaa (Gly or Ala) have small, neutral side chains.. It functions in the pathway protein modification; lipoprotein biosynthesis (signal peptide cleavage). Functionally, this protein specifically catalyzes the removal of signal peptides from prolipoproteins. This is Lipoprotein signal peptidase from Rhodopseudomonas palustris (strain ATCC BAA-98 / CGA009).